Here is a 187-residue protein sequence, read N- to C-terminus: Serine/arginine-rich splicing factor RSZ21 (187 aa).

The RRM domain occupies 2–73 (TRVYVGNLDP…WRVELSHKDK (72 aa)). Disordered regions lie at residues 68-89 (LSHK…IEDS) and 105-187 (RRGR…ANGV). The CCHC-type zinc finger occupies 89 to 106 (SKCYECGELGHFARECRR). Over residues 107–122 (GRGSVRRRSPSPRRRR) the composition is skewed to basic residues. Phosphoserine is present on residues Ser123, Ser132, Ser134, Ser140, Ser146, and Ser159. The segment covering 136 to 155 (RGRRSPPRRRSVTPPRRGRS) has biased composition (basic residues). Over residues 165 to 177 (SRRDSPRRRDSPY) the composition is skewed to basic and acidic residues. Low complexity predominate over residues 178 to 187 (GRRSPYANGV). Ser181 bears the Phosphoserine mark.

The protein belongs to the splicing factor SR family. RSZ subfamily. Component of the spliceosome. Interacts with SNRNP35, AFC2, CYP59, RS2Z33 and RNU1. Interacts with MOS14. Post-translationally, extensively phosphorylated on serine residues in the RS domain. Phosphorylated by AFC2. In terms of tissue distribution, expressed in roots, leaves, flowers and siliques.

It localises to the nucleus speckle. Functionally, probably involved in intron recognition and spliceosome assembly. The chain is Serine/arginine-rich splicing factor RSZ21 (RSZ21) from Arabidopsis thaliana (Mouse-ear cress).